We begin with the raw amino-acid sequence, 353 residues long: N-formyl peptide receptor 3 (353 aa).

Residues 1–27 (METNFSIPLNETEEVLPEPAGHTVLWI) lie on the Extracellular side of the membrane. 2 N-linked (GlcNAc...) asparagine glycosylation sites follow: asparagine 4 and asparagine 10. Residues 28 to 50 (FSLLVHGVTFVFGVLGNGLVIWV) traverse the membrane as a helical segment. The Cytoplasmic portion of the chain corresponds to 51-61 (AGFRMTRTVNT). Residues 62–83 (ICYLNLALADFSFSAILPFRMV) traverse the membrane as a helical segment. Topologically, residues 84–100 (SVAMREKWPFGSFLCKL) are extracellular. The cysteines at positions 98 and 176 are disulfide-linked. The chain crosses the membrane as a helical span at residues 101 to 121 (VHVMIDINLFVSVYLITIIAL). Residues 122 to 140 (DRCICVLHPAWAQNHRTMS) are Cytoplasmic-facing. The chain crosses the membrane as a helical span at residues 141 to 162 (LAKRVMTGLWIFTIVLTLPNFI). Over 163 to 205 (FWTTISTTNGDTYCIFNFAFWGDTAVERLNVFITMAKVFLILH) the chain is Extracellular. The helical transmembrane segment at 206 to 226 (FIIGFSVPMSIITVCYGIIAA) threads the bilayer. The Cytoplasmic portion of the chain corresponds to 227–242 (KIHRNHMIKSSRPLRV). A helical membrane pass occupies residues 243 to 266 (FAAVVASFFICWFPYELIGILMAV). Residues 267–286 (WLKEMLLNGKYKIILVLINP) lie on the Extracellular side of the membrane. The chain crosses the membrane as a helical span at residues 287–306 (TSSLAFFNSCLNPILYVFMG). The Cytoplasmic segment spans residues 307–353 (RNFQERLIRSLPTSLERALTEVPDSAQTSNTDTTSASPPEETELQAM). The disordered stretch occupies residues 327 to 353 (EVPDSAQTSNTDTTSASPPEETELQAM). Polar residues predominate over residues 331–343 (SAQTSNTDTTSAS).

Belongs to the G-protein coupled receptor 1 family. In terms of tissue distribution, detected in various tissues with highest expression in lung.

It is found in the cell membrane. In terms of biological role, low affinity receptor for N-formyl-methionyl peptides, which are powerful neutrophils chemotactic factors. Binding of FMLP to the receptor causes activation of neutrophils. This response is mediated via a G-protein that activates a phosphatidylinositol-calcium second messenger system. Acts as a receptor for humanin. This chain is N-formyl peptide receptor 3 (FPR3), found in Homo sapiens (Human).